The primary structure comprises 460 residues: MKTPETLAFECETGNYHTFCPISCVAWLYQKIEDSFFLVVGTKTCGYFLQNALGVMIFAEPRYAMAELEEGDISAQLNDQKELEKICLQIRDDRNPSVIIWIGTCTTEIIKMDLEGIAPKLEKQIGIPIIVARANGLDYAFTQGEDTVLAAMAHRCPEYKHCTTNLKNRTDEMARIDNHTTNKSPFEASKLTRFNLVLFGSLSSSIASQLNLELKRQSISVSGWLPSQKYEELPGLGEGIYVCGVNPFLSRTATTLMRRRKCKLVGAPFPIGPDGTRAWIEKICSVFDIKSYGLENRESEIWENVKDYIQVINGKSVFFMGDNLLEISLARFLIRCGMIVYEVGIPYMDRRYQAAELLFLQHTCRKMKTPLPRIVEKPDNYGQIQRMHELKPHLAITGMAHANPLEARNIDTKWSVEFTFAQIHGFSSVRDILELVTRPLRRRGVITPGFRSLSKQTTGD.

[4Fe-4S] cluster contacts are provided by Cys-20, Cys-45, and Cys-105.

The protein belongs to the BchN/ChlN family. In terms of assembly, protochlorophyllide reductase is composed of three subunits; ChlL, ChlN and ChlB. Forms a heterotetramer of two ChlB and two ChlN subunits. Requires [4Fe-4S] cluster as cofactor.

It is found in the plastid. The protein localises to the chloroplast. The enzyme catalyses chlorophyllide a + oxidized 2[4Fe-4S]-[ferredoxin] + 2 ADP + 2 phosphate = protochlorophyllide a + reduced 2[4Fe-4S]-[ferredoxin] + 2 ATP + 2 H2O. The protein operates within porphyrin-containing compound metabolism; chlorophyll biosynthesis (light-independent). In terms of biological role, component of the dark-operative protochlorophyllide reductase (DPOR) that uses Mg-ATP and reduced ferredoxin to reduce ring D of protochlorophyllide (Pchlide) to form chlorophyllide a (Chlide). This reaction is light-independent. The NB-protein (ChlN-ChlB) is the catalytic component of the complex. The polypeptide is Light-independent protochlorophyllide reductase subunit N (Adiantum capillus-veneris (Maidenhair fern)).